Consider the following 56-residue polypeptide: Mitoregulin (56 aa).

Residues 2-9 (ADVSERTL) are Mitochondrial matrix-facing. The chain crosses the membrane as a helical span at residues 10-27 (QVSVLVAFASGVVLGWQA). Topologically, residues 28–56 (NRLRRRYLDWRKRRLQDKLATTQKKLDLA) are mitochondrial intermembrane.

Belongs to the mitoregulin family. In terms of assembly, interacts with mitochondrial trifunctional enzyme, a heterotetrameric complex composed of 2 HADHA subunits and 2 HADHB subunits. Interacts with cytochrome b5 reductase CYB5R3; the interaction is required to maintain cellular lipid composition and leads to stimulation of mitochondrial respiratory complex I activity. Interacts with ATP synthase subunit ATP5F1B/ATP5B. As to expression, enriched in heart and skeletal muscle (at protein level). Also enriched in adipose tissue with lower levels detected in liver, pancreas and brain (at protein level). Higher levels in differentiated myotubes than in satellite cells.

Its subcellular location is the mitochondrion inner membrane. Its function is as follows. Positively regulates mitochondrial complex assembly and/or stability. Increases mitochondrial membrane potential while decreasing mitochondrial reactive oxygen species. Increases mitochondrial respiration rate. Increased mitochondrial respiratory activity promotes myogenic differentiation which facilitates muscle growth and regeneration. Increases mitochondrial calcium retention capacity. Plays a role in maintenance of cellular lipid composition through its interaction with cytochrome b5 reductase CYB5R3 which is required for mitochondrial respiratory complex I activity. Interacts with the mitochondrial trifunctional enzyme complex (MTE) and enhances fatty acid beta-oxidation. Not required for MTE formation or stability. Modulates triglyceride clearance in adipocytes through its role in regulating fatty acid beta-oxidation and lipolysis. This is Mitoregulin from Mus musculus (Mouse).